The chain runs to 116 residues: Somatostatin (116 aa).

The signal sequence occupies residues 1-24 (MLSCRLQCALAALSIVLALGGVTC). Residues 25-88 (APSDPRLRQF…QDEMRLELQR (64 aa)) constitute a propeptide that is removed on maturation. Alanine 43 carries the post-translational modification Alanine amide. The disordered stretch occupies residues 62-99 (QTENDALEPEDLSQAAEQDEMRLELQRSANSNPAMAPR). Cysteine 105 and cysteine 116 are joined by a disulfide.

It belongs to the somatostatin family. C-terminal amidation of the neuronostatin peptide is required for its biological activity, including for the regulation of mean arterial pressure.

The protein resides in the secreted. In terms of biological role, inhibits the secretion of pituitary hormones, including that of growth hormone/somatotropin (GH1), PRL, ACTH, luteinizing hormone (LH) and TSH. Also impairs ghrelin- and GnRH-stimulated secretion of GH1 and LH; the inhibition of ghrelin-stimulated secretion of GH1 can be further increased by neuronostatin. May enhance low-glucose-induced glucagon release by pancreatic alpha cells. This effect may be mediated by binding to GPR107 and PKA activation. May regulate cardiac contractile function. May compromise cardiomyocyte viability. In the central nervous system, may impair memory retention and may affect hippocampal excitability. May also have anxiolytic and anorexigenic effects. May play a role in arterial pressure regulation. May inhibit basal, but not ghrelin- or GnRH-stimulated secretion of GH1 or LH, but does not affect the release of other pituitary hormones, including PRL, ACTH, FSH or TSH. Potentiates inhibitory action of somatostatin on ghrelin-stimulated secretion of GH1, but not that on GnRH-stimulated secretion of LH. The chain is Somatostatin (SST) from Canis lupus familiaris (Dog).